Here is a 456-residue protein sequence, read N- to C-terminus: Trigger factor (456 aa).

The 86-residue stretch at 192-277 (GDTVVIDFVG…IHEVKTKEVP (86 aa)) folds into the PPIase FKBP-type domain.

This sequence belongs to the FKBP-type PPIase family. Tig subfamily.

It is found in the cytoplasm. It catalyses the reaction [protein]-peptidylproline (omega=180) = [protein]-peptidylproline (omega=0). In terms of biological role, involved in protein export. Acts as a chaperone by maintaining the newly synthesized protein in an open conformation. Functions as a peptidyl-prolyl cis-trans isomerase. The protein is Trigger factor of Streptococcus pyogenes serotype M12 (strain MGAS9429).